A 187-amino-acid chain; its full sequence is Elongation factor P (187 aa).

The protein belongs to the elongation factor P family.

It is found in the cytoplasm. Its pathway is protein biosynthesis; polypeptide chain elongation. Involved in peptide bond synthesis. Stimulates efficient translation and peptide-bond synthesis on native or reconstituted 70S ribosomes in vitro. Probably functions indirectly by altering the affinity of the ribosome for aminoacyl-tRNA, thus increasing their reactivity as acceptors for peptidyl transferase. This Wolinella succinogenes (strain ATCC 29543 / DSM 1740 / CCUG 13145 / JCM 31913 / LMG 7466 / NCTC 11488 / FDC 602W) (Vibrio succinogenes) protein is Elongation factor P.